Reading from the N-terminus, the 426-residue chain is Dihydroorotase (426 aa).

The Zn(2+) site is built by His-58 and His-60. Residues 60–62 and Asn-92 contribute to the substrate site; that span reads HLR. 3 residues coordinate Zn(2+): Asp-150, His-177, and His-230. Residue Asn-276 coordinates substrate. Asp-303 lines the Zn(2+) pocket. Asp-303 is a catalytic residue. Substrate is bound by residues His-307 and 321 to 322; that span reads FG.

It belongs to the metallo-dependent hydrolases superfamily. DHOase family. Class I DHOase subfamily. The cofactor is Zn(2+).

The enzyme catalyses (S)-dihydroorotate + H2O = N-carbamoyl-L-aspartate + H(+). It functions in the pathway pyrimidine metabolism; UMP biosynthesis via de novo pathway; (S)-dihydroorotate from bicarbonate: step 3/3. Its function is as follows. Catalyzes the reversible cyclization of carbamoyl aspartate to dihydroorotate. This is Dihydroorotase from Listeria monocytogenes serotype 4b (strain F2365).